A 210-amino-acid chain; its full sequence is Nucleoside triphosphate pyrophosphatase (210 aa).

Asp79 (proton acceptor) is an active-site residue.

Belongs to the Maf family. The cofactor is a divalent metal cation.

The protein localises to the cytoplasm. The catalysed reaction is a ribonucleoside 5'-triphosphate + H2O = a ribonucleoside 5'-phosphate + diphosphate + H(+). The enzyme catalyses a 2'-deoxyribonucleoside 5'-triphosphate + H2O = a 2'-deoxyribonucleoside 5'-phosphate + diphosphate + H(+). Functionally, nucleoside triphosphate pyrophosphatase. May have a dual role in cell division arrest and in preventing the incorporation of modified nucleotides into cellular nucleic acids. This is Nucleoside triphosphate pyrophosphatase from Mycolicibacterium paratuberculosis (strain ATCC BAA-968 / K-10) (Mycobacterium paratuberculosis).